We begin with the raw amino-acid sequence, 605 residues long: MSQSSVRNFCIIAHIDHGKSTLADRLIEMTGTLRHDEMCEQVMDSMELERERGITIKAKAIRLRYISKDKQEYRLNLIDTPGHVDFSYEVSRTIAACEGAILVIDATQGIQAQTLANVYLAIEYNLEIIPVINKIDLPGADIPRVMGEIKSVLGYDEDSVLQISAKLGLGVPELLEAIVNKVPAPKGNANQPLRALIFDSHYDPYKGVVAYLRVADGNINKGDDLRLMGQGTEFRVLEAGYFAPAQVAALRLDVGDVGYIATGLKSVGECRVGDTVTLQHGGAIQPLIGYHPAKAMVFAGIYPTQTDDYHELREAMEKLSLNDASLSSEPESSPLLGHGFRCGFLGLLHLDIIVERLEREFNLSLVVTSPGVSLTVTRIGGEAFTVVNPNEMPLPHEIARIEEPWVSVVIITPSKYIGTVMDLVRENYGVYKNTEYLGQLAMSELGQRVQLHYDMPLRSILTTFHDQLKSRTQGYASLDYEFIGYRDANLSKIDVLVNDVPVDAFSRIIPPDKAHEIGEALVKKLKEMIPRQLYQVTLQAAIGSKIVARADISAKRKDVIAKCYGGDITRKRKLLDKQKEGKKKMRQIGKVEVPKEAFLSVLKLQ.

A tr-type G domain is found at 4 to 186; sequence SSVRNFCIIA…AIVNKVPAPK (183 aa). GTP-binding positions include 16 to 21 and 133 to 136; these read DHGKST and NKID.

It belongs to the TRAFAC class translation factor GTPase superfamily. Classic translation factor GTPase family. LepA subfamily.

It is found in the cell membrane. The catalysed reaction is GTP + H2O = GDP + phosphate + H(+). Functionally, required for accurate and efficient protein synthesis under certain stress conditions. May act as a fidelity factor of the translation reaction, by catalyzing a one-codon backward translocation of tRNAs on improperly translocated ribosomes. Back-translocation proceeds from a post-translocation (POST) complex to a pre-translocation (PRE) complex, thus giving elongation factor G a second chance to translocate the tRNAs correctly. Binds to ribosomes in a GTP-dependent manner. The sequence is that of Elongation factor 4 from Dehalococcoides mccartyi (strain ATCC BAA-2100 / JCM 16839 / KCTC 5957 / BAV1).